A 225-amino-acid polypeptide reads, in one-letter code: Small ribosomal subunit protein uS2 (225 aa).

Over residues 1 to 13 the composition is skewed to basic and acidic residues; it reads MAEAKPALEKEAA. Residues 1–33 form a disordered region; that stretch reads MAEAKPALEKEAAVKTGSIPSESEDETASHKEG.

Belongs to the universal ribosomal protein uS2 family.

This Methanosarcina acetivorans (strain ATCC 35395 / DSM 2834 / JCM 12185 / C2A) protein is Small ribosomal subunit protein uS2.